A 600-amino-acid chain; its full sequence is Jacalin-related lectin 18 (600 aa).

4 consecutive Jacalin-type lectin domains span residues 12–158 (TQRL…YFTC), 161–303 (PTRM…YFTT), 304–447 (SPFI…YFRL), and 454–597 (GEKV…HVLP).

This sequence belongs to the jacalin lectin family.

The polypeptide is Jacalin-related lectin 18 (JAL18) (Arabidopsis thaliana (Mouse-ear cress)).